We begin with the raw amino-acid sequence, 542 residues long: uncharacterized protein (542 aa).

The tract at residues 256–275 is disordered; sequence KKSTTTSSPPITTTHLSKPE. The segment covering 258 to 269 has biased composition (low complexity); it reads STTTSSPPITTT.

This is an uncharacterized protein from Caenorhabditis elegans.